The primary structure comprises 1424 residues: DNA-directed RNA polymerase subunit beta' (1424 aa).

The Zn(2+) site is built by cysteine 60, cysteine 62, cysteine 75, and cysteine 78. 3 residues coordinate Mg(2+): aspartate 449, aspartate 451, and aspartate 453. Positions 783, 857, 864, and 867 each coordinate Zn(2+).

The protein belongs to the RNA polymerase beta' chain family. As to quaternary structure, the RNAP catalytic core consists of 2 alpha, 1 beta, 1 beta' and 1 omega subunit. When a sigma factor is associated with the core the holoenzyme is formed, which can initiate transcription. Mg(2+) serves as cofactor. Zn(2+) is required as a cofactor.

The enzyme catalyses RNA(n) + a ribonucleoside 5'-triphosphate = RNA(n+1) + diphosphate. DNA-dependent RNA polymerase catalyzes the transcription of DNA into RNA using the four ribonucleoside triphosphates as substrates. The chain is DNA-directed RNA polymerase subunit beta' from Treponema denticola (strain ATCC 35405 / DSM 14222 / CIP 103919 / JCM 8153 / KCTC 15104).